A 742-amino-acid polypeptide reads, in one-letter code: Mechanosensitive ion channel protein 9 (742 aa).

The tract at residues 1–117 (MAERRVSNGE…REENGGRSLR (117 aa)) is disordered. A compositionally biased stretch (basic and acidic residues) spans 17–26 (SDKEDSKDPR). A phosphoserine mark is found at Ser-28 and Ser-36. The span at 105–117 (DSTREENGGRSLR) shows a compositional bias: basic and acidic residues. Phosphoserine is present on residues Ser-142 and Ser-145. 6 consecutive transmembrane segments (helical) span residues 180–200 (AFLE…SLTI), 221–241 (MVTL…VFII), 261–281 (NVQV…LFDG), 292–312 (FLDF…LFLV), 524–544 (LITG…LDIA), and 559–579 (LAFM…FVFV).

Belongs to the MscS (TC 1.A.23) family. Detected in the epidermis, cortex, and endodermis of the root tip.

Its subcellular location is the cell membrane. Mechanosensitive channel that opens in response to stretch forces in the membrane lipid bilayer. The polypeptide is Mechanosensitive ion channel protein 9 (MSL9) (Arabidopsis thaliana (Mouse-ear cress)).